Reading from the N-terminus, the 108-residue chain is Putative septation protein SpoVG (108 aa).

Belongs to the SpoVG family.

In terms of biological role, could be involved in septation. This is Putative septation protein SpoVG from Bdellovibrio bacteriovorus (strain ATCC 15356 / DSM 50701 / NCIMB 9529 / HD100).